The primary structure comprises 457 residues: PDZ and LIM domain protein 7 (457 aa).

In terms of domain architecture, PDZ spans 1-85 (MDSFKVVLEG…RLSLGLSRAQ (85 aa)). The residue at position 78 (serine 78) is a Phosphoserine. Disordered stretches follow at residues 82-166 (SRAQ…QSRS) and 186-226 (FMKK…PWAV). Threonine 96 carries the phosphothreonine modification. The residue at position 103 (arginine 103) is an Asymmetric dimethylarginine. A Phosphoserine modification is found at serine 111. Over residues 126–135 (DSTLRQNGQL) the composition is skewed to polar residues. The segment covering 144–157 (SKQRLMEDTEDWRP) has biased composition (basic and acidic residues). Serine 247 carries the phosphoserine modification. LIM zinc-binding domains follow at residues 280–338 (PVCH…VRYA), 339–398 (PNCA…MFGT), and 399–457 (KCRG…FSHV).

Specifically binds via its LIM zinc-binding 3 domain (LIM 3) domain to endocytic codes of INSR, but not with those of IGF1R, LDLR, TFRC, or EGFR. Interacts with various PKC isoforms through the LIM zinc-binding domains. Binds to RET in a phosphorylation-independent manner via its LIM zinc-binding domain 2 (LIM 2). Probably part of a complex with SHC and the RET dimer. Interacts with TPM2, TBX4 and TBX5.

It localises to the cytoplasm. The protein localises to the cytoskeleton. Its function is as follows. May function as a scaffold on which the coordinated assembly of proteins can occur. May play a role as an adapter that, via its PDZ domain, localizes LIM-binding proteins to actin filaments of both skeletal muscle and nonmuscle tissues. Involved in both of the two fundamental mechanisms of bone formation, direct bone formation (e.g. embryonic flat bones mandible and cranium), and endochondral bone formation (e.g. embryonic long bone development). Plays a role during fracture repair. Involved in BMP6 signaling pathway. The chain is PDZ and LIM domain protein 7 (Pdlim7) from Mus musculus (Mouse).